Reading from the N-terminus, the 1132-residue chain is NUT family member 1 (1132 aa).

Disordered stretches follow at residues 1-56 (MASD…SVFS), 337-365 (AASK…EIPP), 383-405 (LATG…EGMY), 476-584 (EEED…VERR), 693-714 (RGTP…GERD), 873-892 (DASS…NSFS), and 922-1017 (PLNV…DEEL). Over residues 21-36 (APSPSPALPFLPPTSD) the composition is skewed to pro residues. A compositionally biased stretch (basic residues) spans 337 to 352 (AASKTRAPRRRQRKAQ). The segment covering 395–404 (EGQQQEEEGM) has biased composition (acidic residues). 3 stretches are compositionally biased toward polar residues: residues 487 to 497 (SGAQLDSSPSG), 697 to 706 (MAQSYDQNPS), and 883 to 892 (EAGSRGNSFS). A compositionally biased stretch (basic and acidic residues) spans 932–942 (GEGRVDPDLSK). Positions 950–971 (QESQESYTTGTPKATSSHQGLG) are enriched in polar residues. 3 positions are modified to phosphoserine: Ser-1026, Ser-1029, and Ser-1031. Residues 1031–1132 (SPREHPLSPH…GRRKKRRRSQ (102 aa)) form a disordered region. Position 1046 is an N5-methylglutamine (Gln-1046). Over residues 1123-1132 (GRRKKRRRSQ) the composition is skewed to basic residues.

This sequence belongs to the NUT family. Methylated at Gln-1046 by N6AMT1. Post-translationally, phosphorylation on Ser-1026, Ser-1029 or Ser-1031 is important for cytoplasmic export. In terms of tissue distribution, specifically expressed in testis.

It localises to the cytoplasm. The protein resides in the nucleus. Functionally, plays a role in the regulation of proliferation. Regulates TERT expression by modulating SP1 binding to TERT promoter binding sites. In Homo sapiens (Human), this protein is NUT family member 1.